The following is a 374-amino-acid chain: Speckle-type POZ protein (374 aa).

Residues 31–161 (KFSYMWTINN…DDKLTLFCEV (131 aa)) enclose the MATH domain. A required for nuclear localization region spans residues 71-191 (VNPKGLDEES…PECRLADELG (121 aa)). The segment at 123–133 (YRFVQGKDWGF) is important for binding substrate proteins. Positions 173–297 (QNTMNMVKVP…MCEDALCSNL (125 aa)) constitute a BTB domain. Important for homodimerization regions lie at residues 186-217 (LADE…HKAI) and 297-355 (LSVE…AYRS).

It belongs to the Tdpoz family. Interacts with GLI2 and GLI3. Homodimer and homooligomer. Heterodimer with SPOPL. Each dimer interacts with two CUL3 molecules. Part of cullin-RING-based BCR (BTB-CUL3-RBX1) E3 ubiquitin-protein ligase complexes that contain CUL3 and homodimeric SPOP, or the heterodimer formed by SPOP and SPOPL, plus a target protein, such as MACROH2A1, PDX1/IPF1, BMI1, BRMS1 and DAXX. Interacts with IRF1; this interaction mediates IRF1 proteasomal degradation. Interacts with HNF1A.

The protein resides in the nucleus. It is found in the nucleus speckle. It functions in the pathway protein modification; protein ubiquitination. Component of a cullin-RING-based BCR (BTB-CUL3-RBX1) E3 ubiquitin-protein ligase complex that mediates the ubiquitination of target proteins, leading most often to their proteasomal degradation. In complex with CUL3, involved in ubiquitination and proteasomal degradation of BRMS1, DAXX, PDX1/IPF1, GLI2 and GLI3. In complex with CUL3, involved in ubiquitination of MACROH2A1 and BMI1; this does not lead to their proteasomal degradation. Inhibits transcriptional activation of PDX1/IPF1 targets, such as insulin, by promoting PDX1/IPF1 degradation. The cullin-RING-based BCR (BTB-CUL3-RBX1) E3 ubiquitin-protein ligase complex containing homodimeric SPOP has higher ubiquitin ligase activity than the complex that contains the heterodimer formed by SPOP and SPOPL. Involved in the regulation of bromodomain and extra-terminal motif (BET) proteins BRD2, BRD3, BRD4 stability.Plays an essential role for proper translation, but not for their degradation, of critical DNA replication licensing factors CDT1 and CDC6, thereby participating in DNA synthesis and cell proliferation. Regulates interferon regulatory factor 1/IRF1 proteasomal turnover by targeting S/T-rich degrons in IRF1. Involved in ubiquitination of BRDT and promotes its degradation, thereby regulates histone removal in early condensing spermatids prior to histone-to-protamine exchange. This is Speckle-type POZ protein (SPOP) from Bos taurus (Bovine).